Consider the following 397-residue polypeptide: N(6)-adenosine-methyltransferase non-catalytic subunit METTL14 (397 aa).

Disordered stretches follow at residues N37 to P67 and E368 to R397. Residues D40–G51 show a composition bias toward polar residues. The span at L382–R397 shows a compositional bias: basic residues.

It belongs to the MT-A70-like family. In terms of assembly, component of the WMM complex, a N6-methyltransferase complex composed of a catalytic subcomplex, named MAC, and of an associated subcomplex, named MACOM. The MAC subcomplex is composed of Ime4/Mettl3 and Mettl14. The MACOM subcomplex is composed of fl(2)d, Flacc/Xio, Hakai, vir, and, in some cases of nito.

It localises to the nucleus. Its function is as follows. Non-catalytic component of the WMM complex, a complex that mediates N6-methyladenosine (m6A) methylation of mRNAs, a modification that plays a role in the efficiency of mRNA splicing and is required for sex determination. In the heterodimer formed with Ime4/Mettl3, Mettl14 constitutes the RNA-binding scaffold that recognizes the substrate rather than the catalytic core. Required for sex determination and dosage compensation via Sxl alternative splicing: m6A methylation acts as a key regulator of Sxl pre-mRNA and promotes female-specific alternative splicing of Sxl, which determines female physiognomy. M6A methylation is also required for neuronal functions. The polypeptide is N(6)-adenosine-methyltransferase non-catalytic subunit METTL14 (Drosophila melanogaster (Fruit fly)).